The sequence spans 66 residues: Large ribosomal subunit protein bL33c (66 aa).

The protein belongs to the bacterial ribosomal protein bL33 family.

Its subcellular location is the plastid. It localises to the chloroplast. The chain is Large ribosomal subunit protein bL33c from Cycas taitungensis (Prince sago).